The following is a 142-amino-acid chain: MRIINAEGLILGRLASKVAKMLLEGEEVVIVNAEKAVITGNRDVIFKKYKQRTELRTLTNPRRGPFYPKRSDEIVRRTIRGMLPWKTDRGRKAFKRLKVYVGIPKEFQGKELETIIEAHVSRLSRPKYVTVGEVAKFLGGKF.

The protein belongs to the universal ribosomal protein uL13 family. Part of the 50S ribosomal subunit.

Its function is as follows. This protein is one of the early assembly proteins of the 50S ribosomal subunit, although it is not seen to bind rRNA by itself. It is important during the early stages of 50S assembly. This is Large ribosomal subunit protein uL13 from Pyrococcus furiosus (strain ATCC 43587 / DSM 3638 / JCM 8422 / Vc1).